Consider the following 151-residue polypeptide: Ribonuclease H (151 aa).

Residues 1-143 enclose the RNase H type-1 domain; it reads MSDVVVIHTD…ADVLATRGLQ (143 aa). Positions 10, 49, 71, and 135 each coordinate Mg(2+).

This sequence belongs to the RNase H family. In terms of assembly, monomer. It depends on Mg(2+) as a cofactor.

Its subcellular location is the cytoplasm. The enzyme catalyses Endonucleolytic cleavage to 5'-phosphomonoester.. Functionally, endonuclease that specifically degrades the RNA of RNA-DNA hybrids. This chain is Ribonuclease H, found in Mycolicibacterium gilvum (strain PYR-GCK) (Mycobacterium gilvum (strain PYR-GCK)).